The primary structure comprises 506 residues: CDK5 regulatory subunit-associated protein 3 (506 aa).

3 short sequence motifs (shuffled ATG8-binding motif) span residues 267–270 (IDWG), 292–295 (IDWG), and 310–313 (IDWG). The interval 269 to 506 (WGDFGVEAVS…RPVNLMGTSL (238 aa)) is required for interaction with UFL1 and mediates interaction with CHEK1. Positions 355–370 (DELMELEIFLARRAVE) are RPL10a-binding domain (RBD). Residue Lys450 forms a Glycyl lysine isopeptide (Lys-Gly) (interchain with G-Cter in SUMO2) linkage.

Belongs to the CDK5RAP3 family. In terms of assembly, substrate adapter component of the UFM1 ribosome E3 ligase (UREL) complex, composed of UFL1, DDRGK1 and CDK5RAP3. Interaction with UFL1 anchors CDK5RAP3 in the cytoplasm, preventing its translocation to the nucleus which allows expression of the CCND1 cyclin and progression of cells through the G1/S transition. Interacts with ATG8 family proteins MAP1LC3A, MAP1LC3B, GABARAP, GABARAPL1 and GABARAPL2. Interacts with CDK5R1; competes with CDK5RAP1 and CDK5RAP2. Interacts with RELA. Interacts with CHEK1; may negatively regulate CHEK1 and thereby stimulate entry into mitosis. Interacts with CDKN2A/ARF and MDM2; forms a ternary complex involved in regulation of p53/TP53. Interacts with MAPK14. Interacts with CCNB1. Interacts with TUBG1; may regulate CDK5RAP3 in mitotic G2/M transition checkpoint. Post-translationally, may be phosphorylated by CDK5. In terms of processing, ubiquitinated. Probably triggers proteasomal degradation and is negatively regulated by UFL1. May be ufmylated. Post-translationally, cleaved by caspases early during apoptosis, the resulting peptides may play a role in rupture of the nuclear envelope.

The protein resides in the endoplasmic reticulum membrane. It is found in the cytoplasm. The protein localises to the nucleus. It localises to the cytoskeleton. Its subcellular location is the microtubule organizing center. The protein resides in the centrosome. Its function is as follows. Substrate adapter of E3 ligase complexes mediating ufmylation, the covalent attachment of the ubiquitin-like modifier UFM1 to substrate proteins, and which is involved in various processes, such as ribosome recycling and reticulophagy (also called ER-phagy). As part of the UREL complex, plays a key role in ribosome recycling by promoting mono-ufmylation of RPL26/uL24 subunit of the 60S ribosome. Ufmylation of RPL26/uL24 occurs on free 60S ribosomes following ribosome dissociation: it weakens the junction between post-termination 60S subunits and SEC61 translocons, promoting release and recycling of the large ribosomal subunit from the endoplasmic reticulum membrane. Ufmylation of RPL26/uL24 and subsequent 60S ribosome recycling either take place after normal termination of translation or after ribosome stalling during cotranslational translocation at the endoplasmic reticulum. Within the UREL complex, CDK5RAP3 acts as a substrate adapter that constrains UFL1 ligase activity to mono-ufmylate RPL26/uL24 at 'Lys-134'. The UREL complex is also involved in reticulophagy in response to endoplasmic reticulum stress by promoting ufmylation of proteins such as CYB5R3, thereby promoting lysosomal degradation of ufmylated proteins. Also acts as a regulator of transcription: negatively regulates NF-kappa-B-mediated gene transcription through the control of RELA phosphorylation. Also regulates mitotic G2/M transition checkpoint and mitotic G2 DNA damage checkpoint. Through its interaction with CDKN2A/ARF and MDM2 may induce MDM2-dependent p53/TP53 ubiquitination, stabilization and activation in the nucleus, thereby promoting G1 cell cycle arrest and inhibition of cell proliferation. May also play a role in the rupture of the nuclear envelope during apoptosis. May regulate MAPK14 activity by regulating its dephosphorylation by PPM1D/WIP1. Required for liver development. This Pongo abelii (Sumatran orangutan) protein is CDK5 regulatory subunit-associated protein 3.